Here is a 334-residue protein sequence, read N- to C-terminus: Serine/threonine-protein kinase SAPK3 (334 aa).

The Protein kinase domain occupies 5 to 261; the sequence is YEALKELGAG…IPEIKKHTWF (257 aa). Residues 11 to 19 and K34 each bind ATP; that span reads LGAGNFGVA. The active-site Proton acceptor is the D124.

The protein belongs to the protein kinase superfamily. Ser/Thr protein kinase family. In terms of processing, autophosphorylated in presence of Ca(2+). In terms of tissue distribution, expressed in leaves and maturing seeds, but not in roots and stems of field-grown plants.

The protein resides in the cytoplasm. The protein localises to the nucleus. The enzyme catalyses L-seryl-[protein] + ATP = O-phospho-L-seryl-[protein] + ADP + H(+). It catalyses the reaction L-threonyl-[protein] + ATP = O-phospho-L-threonyl-[protein] + ADP + H(+). With respect to regulation, activated by phosphorylation. In terms of biological role, may play a role in signal transduction of hyperosmotic response. The protein is Serine/threonine-protein kinase SAPK3 (SAPK3) of Oryza sativa subsp. indica (Rice).